The chain runs to 109 residues: uncharacterized protein (109 aa).

In terms of domain architecture, HTH cro/C1-type spans 42 to 100 (LEEKLKQEKIDRKYLAEVTNIPYTTVSRIMRAEANREFNPEIDTILKIAKYFNCTMDEV). Residues 53–72 (RKYLAEVTNIPYTTVSRIMR) constitute a DNA-binding region (H-T-H motif).

This is an uncharacterized protein from Rickettsia conorii (strain ATCC VR-613 / Malish 7).